A 703-amino-acid polypeptide reads, in one-letter code: FERM domain-containing protein 7 (703 aa).

Residues 2–282 form the FERM domain; the sequence is LHLKVQFLDD…EYHAFFRLSE (281 aa). A coiled-coil region spans residues 525 to 552; it reads RNMRIKSLQQDLQELQEAMARTSGRSNI.

As to expression, in the developing cerebral cortex, strong expression is observed in the ventricular and intermediate zones at 13 and 17 dpc. At 17 dpc and P0, expression appears to be restricted to the cortical plate. In neonates, highly expressed in cortex, hippocampus, cerebellum, olfactory bulb and eye with little or no expression in liver, kidney, skeletal muscle or heart muscle (at protein level).

Its subcellular location is the cell projection. It localises to the neuron projection. It is found in the growth cone. Plays a role in neurite development, may be through the activation of the GTPase RAC1. Plays a role in the control of eye movement and gaze stability. The chain is FERM domain-containing protein 7 from Mus musculus (Mouse).